A 256-amino-acid chain; its full sequence is MNKETISQIKARLQTITDTTDPYLQTIHDDSRKGVQTAIQQFERRLARQKEAEEAFNNRFKYEKYYWENGCQYIAGMDEVGRGPLAGPVVTCAVILNADFDLIGVTDSKQLTRHERENLYLRIVDEAVEVSIAVNDAPVIDQMNIYAATQDAMIRAVNHLHHRPDHLIVDAVPLAIDIPQTTLIKGDQKSISVAAASIVAKEYRDHLMRDYDYVYPGYGFAQNMGYGTKEHLAGLEKMGATPIHRRSFNPVPKYLN.

One can recognise an RNase H type-2 domain in the interval 72–256; sequence QYIAGMDEVG…SFNPVPKYLN (185 aa). Asp78, Glu79, and Asp170 together coordinate a divalent metal cation.

The protein belongs to the RNase HII family. The cofactor is Mn(2+). Mg(2+) is required as a cofactor.

Its subcellular location is the cytoplasm. The catalysed reaction is Endonucleolytic cleavage to 5'-phosphomonoester.. Functionally, endonuclease that specifically degrades the RNA of RNA-DNA hybrids. The sequence is that of Ribonuclease HII from Limosilactobacillus reuteri (strain DSM 20016) (Lactobacillus reuteri).